We begin with the raw amino-acid sequence, 367 residues long: Protein-glutamate methylesterase/protein-glutamine glutaminase (367 aa).

The Response regulatory domain occupies 6 to 123; sequence RVLVVDDSAF…SLGIKQLADE (118 aa). D57 carries the 4-aspartylphosphate modification. The 197-residue stretch at 165-361 folds into the CheB-type methylesterase domain; sequence ISKKEIVVVI…DILLKKVNEY (197 aa). Catalysis depends on residues S177, H204, and D303.

Belongs to the CheB family. Phosphorylated by CheA. Phosphorylation of the N-terminal regulatory domain activates the methylesterase activity.

It localises to the cytoplasm. The catalysed reaction is [protein]-L-glutamate 5-O-methyl ester + H2O = L-glutamyl-[protein] + methanol + H(+). It carries out the reaction L-glutaminyl-[protein] + H2O = L-glutamyl-[protein] + NH4(+). Functionally, involved in chemotaxis. Part of a chemotaxis signal transduction system that modulates chemotaxis in response to various stimuli. Catalyzes the demethylation of specific methylglutamate residues introduced into the chemoreceptors (methyl-accepting chemotaxis proteins or MCP) by CheR. Also mediates the irreversible deamidation of specific glutamine residues to glutamic acid. The sequence is that of Protein-glutamate methylesterase/protein-glutamine glutaminase from Caldanaerobacter subterraneus subsp. tengcongensis (strain DSM 15242 / JCM 11007 / NBRC 100824 / MB4) (Thermoanaerobacter tengcongensis).